A 209-amino-acid chain; its full sequence is Uracil phosphoribosyltransferase (209 aa).

5-phospho-alpha-D-ribose 1-diphosphate is bound by residues R79, R104, and 131 to 139; that span reads DPMLATGGS. Uracil contacts are provided by residues I194 and 199 to 201; that span reads GDA. A 5-phospho-alpha-D-ribose 1-diphosphate-binding site is contributed by D200.

This sequence belongs to the UPRTase family. Mg(2+) is required as a cofactor.

The catalysed reaction is UMP + diphosphate = 5-phospho-alpha-D-ribose 1-diphosphate + uracil. Its pathway is pyrimidine metabolism; UMP biosynthesis via salvage pathway; UMP from uracil: step 1/1. With respect to regulation, allosterically activated by GTP. Its function is as follows. Catalyzes the conversion of uracil and 5-phospho-alpha-D-ribose 1-diphosphate (PRPP) to UMP and diphosphate. The sequence is that of Uracil phosphoribosyltransferase from Latilactobacillus sakei (Lactobacillus sakei).